Reading from the N-terminus, the 192-residue chain is Elongation factor P (192 aa).

Lys37 is modified (N6-(3,6-diaminohexanoyl)-5-hydroxylysine).

The protein belongs to the elongation factor P family. In terms of processing, may be beta-lysylated on the epsilon-amino group of Lys-37 by the combined action of EpmA and EpmB, and then hydroxylated on the C5 position of the same residue by EpmC (if this protein is present). Lysylation is critical for the stimulatory effect of EF-P on peptide-bond formation. The lysylation moiety may extend toward the peptidyltransferase center and stabilize the terminal 3-CCA end of the tRNA. Hydroxylation of the C5 position on Lys-37 may allow additional potential stabilizing hydrogen-bond interactions with the P-tRNA.

Its subcellular location is the cytoplasm. It participates in protein biosynthesis; polypeptide chain elongation. In terms of biological role, involved in peptide bond synthesis. Alleviates ribosome stalling that occurs when 3 or more consecutive Pro residues or the sequence PPG is present in a protein, possibly by augmenting the peptidyl transferase activity of the ribosome. Modification of Lys-37 is required for alleviation. This Acinetobacter baylyi (strain ATCC 33305 / BD413 / ADP1) protein is Elongation factor P.